We begin with the raw amino-acid sequence, 660 residues long: Protein NEDD1 (660 aa).

WD repeat units lie at residues 1–31, 32–71, 75–114, 117–156, 160–200, 204–244, 246–285, and 289–332; these read MQENLRFASSGDDIKIWDASSMTLVDKFNPH, TSPHGISSICWSSNNNFLVTASSSGDKIVVSSCKCKPVPL, AEGQKQTCVNLNSTSMYLVSGGLNNTVNIWDLKSKRVHRS, DHKDQVTCVTYNWNDCYIASGSLSGEIILHSVTTNLSSTP, GSNQ…PYHN, VHKA…LVKT, VADTPLTAVDFMPDGATLAIGSSRGKIYQYDLRMLKSPVK, and AHKT…NAAS. S325 is modified (phosphoserine). Positions 369–411 are disordered; that stretch reads QEKAGLPRSINTDTLSKETDSGKNQDFSSFDDTGKSSLGDMFS. At T382 the chain carries Phosphothreonine; by PLK1. S397 carries the phosphoserine; by PLK1 modification. S411 carries the post-translational modification Phosphoserine. Residue S426 is modified to Phosphoserine; by PLK1. 2 positions are modified to phosphoserine: S468 and S516. A compositionally biased stretch (polar residues) spans 507 to 523; that stretch reads GAESGNLNTSPSSNQTR. Residues 507–532 are disordered; sequence GAESGNLNTSPSSNQTRNSEKFEKPE. T550 is subject to Phosphothreonine; by CDK1. S637 carries the phosphoserine; by PLK1 modification.

Interacts with FAM29A. Interacts with HSPA1A and HSPA1B. Interacts with gamma-tubulin in a HSPA1A/B-dependent manner. In terms of processing, during mitosis, prior phosphorylation on Thr-550 by CDK1 promotes subsequent phosphorylation by PLK1 on Thr-382, Ser-397, Ser-426 and Ser-637. Phosphorylated NEDD1 can interact with gamma-tubulin for targeting the gamma-tubulin ring complex (gTuRC) to the centrosome, an important step for spindle formation.

It localises to the cytoplasm. The protein resides in the cytoskeleton. It is found in the microtubule organizing center. The protein localises to the centrosome. Required for mitosis progression. Promotes the nucleation of microtubules from the spindle. This Homo sapiens (Human) protein is Protein NEDD1 (NEDD1).